We begin with the raw amino-acid sequence, 538 residues long: Atos homolog protein B (538 aa).

Polar residues-rich tracts occupy residues 1–12 (MRHVQAETSPSS) and 129–141 (GGSS…SGAR). Disordered stretches follow at residues 1–98 (MRHV…EPPT), 129–185 (GGSS…QLHT), and 201–303 (LVSG…PTDC). Pro residues predominate over residues 227–238 (HTPPGPGPPGPC). Residues serine 254 and serine 255 each carry the phosphoserine modification. The tract at residues 348-430 (LLGNFEESLL…VPKVGTIQVT (83 aa)) is required for macropage invasion. Residues 436 to 444 (QTVVKMFLV) form a transactivation domain 1 (TAD1) region.

The protein belongs to the ATOS family.

It is found in the nucleus. Its function is as follows. Transcription regulator that may syncronize transcriptional and translational programs. In Bos taurus (Bovine), this protein is Atos homolog protein B.